The following is a 109-amino-acid chain: UPF0235 protein MA_4097 (109 aa).

Belongs to the UPF0235 family.

The sequence is that of UPF0235 protein MA_4097 from Methanosarcina acetivorans (strain ATCC 35395 / DSM 2834 / JCM 12185 / C2A).